We begin with the raw amino-acid sequence, 261 residues long: Ribosome biogenesis protein C3_06160C_A (261 aa).

Residues 1–38 (MPQNEYIEQHIKKHGRRLDYEERKRKKEAREGHRVAKD) are disordered. 2 consecutive short sequence motifs (nuclear localization signal) follow at residues 11 to 18 (IKKHGRRL) and 51 to 58 (AKKRYAEK). Over residues 17 to 37 (RLDYEERKRKKEAREGHRVAK) the composition is skewed to basic and acidic residues. Residues 59–85 (VAMKKKIKAHQESKVKGPSTPKAEDGE) are disordered.

This sequence belongs to the eukaryotic ribosomal protein eS8 family. Ribosome biogenesis protein NSA2 subfamily. Component of the pre-66S ribosomal particle. Interacts with NOP7 and RRP1. Interacts with RSA4 (via WD repeats).

The protein resides in the nucleus. It is found in the nucleolus. In terms of biological role, involved in the biogenesis of the 60S ribosomal subunit. May play a part in the quality control of pre-60S particles. The protein is Ribosome biogenesis protein C3_06160C_A of Candida albicans (strain SC5314 / ATCC MYA-2876) (Yeast).